Reading from the N-terminus, the 353-residue chain is MGKVAVGLSGGVDSSVTAGILHRQGYTVEGVTLWLMKGKGQCCSEGMVDAADICEQLGIPHHIVDSRDLFQKYIVDYVVSGYEVGVTPLPCSQCNRMVKFGPMLQWAKAELGIDQIATGHYARIRYNDQTGRYELLRAVDRHKDQSYFLYDLTQEMLAGTLFPLGEMTKGETRQIAAEMQLSTAKKPESQDLCLIEAHGSMKTFLDKYIEQREGEIVDLDGKVLGHHTGIHHYTIGQRKGLGIAAPEPLYVVKLDNVMNRVVVSTRDRAGQSECTVQRMNWLALPGITSPIRAEVQVRYRSGAVPVTVIPLEGDRLKLVFEEPQFGITPGQAAVLYDGDRVLGGGIIEHPEAA.

ATP contacts are provided by residues 7 to 14 (GLSGGVDS) and leucine 33. The active-site Nucleophile is the cysteine 94. An intrachain disulfide couples cysteine 94 to cysteine 193. Residue glycine 119 participates in ATP binding. The interval 143-145 (KDQ) is interaction with tRNA. Cysteine 193 (cysteine persulfide intermediate) is an active-site residue. The interval 298 to 299 (RY) is interaction with tRNA.

Belongs to the MnmA/TRMU family.

The protein resides in the cytoplasm. The enzyme catalyses S-sulfanyl-L-cysteinyl-[protein] + uridine(34) in tRNA + AH2 + ATP = 2-thiouridine(34) in tRNA + L-cysteinyl-[protein] + A + AMP + diphosphate + H(+). Catalyzes the 2-thiolation of uridine at the wobble position (U34) of tRNA, leading to the formation of s(2)U34. The sequence is that of tRNA-specific 2-thiouridylase MnmA from Picosynechococcus sp. (strain ATCC 27264 / PCC 7002 / PR-6) (Agmenellum quadruplicatum).